The following is a 353-amino-acid chain: DNA-directed RNA polymerase subunit alpha (353 aa).

The tract at residues 1–234 (MVREKVTVST…DLFIPFLHTE (234 aa)) is alpha N-terminal domain (alpha-NTD). The tract at residues 267–353 (KRALKSIFID…LAQLIDSKSG (87 aa)) is alpha C-terminal domain (alpha-CTD).

The protein belongs to the RNA polymerase alpha chain family. As to quaternary structure, in plastids the minimal PEP RNA polymerase catalytic core is composed of four subunits: alpha, beta, beta', and beta''. When a (nuclear-encoded) sigma factor is associated with the core the holoenzyme is formed, which can initiate transcription.

The protein resides in the plastid. It is found in the chloroplast. It catalyses the reaction RNA(n) + a ribonucleoside 5'-triphosphate = RNA(n+1) + diphosphate. In terms of biological role, DNA-dependent RNA polymerase catalyzes the transcription of DNA into RNA using the four ribonucleoside triphosphates as substrates. The sequence is that of DNA-directed RNA polymerase subunit alpha from Daucus carota (Wild carrot).